We begin with the raw amino-acid sequence, 492 residues long: Protein nucleotidyltransferase YdiU (492 aa).

ATP is bound by residues Gly-90, Gly-92, Arg-93, Lys-113, Asp-125, Gly-126, Arg-176, and Arg-183. The Proton acceptor role is filled by Asp-252. Mg(2+)-binding residues include Asn-253 and Asp-262. Asp-262 provides a ligand contact to ATP.

The protein belongs to the SELO family. The cofactor is Mg(2+). Mn(2+) is required as a cofactor.

It catalyses the reaction L-seryl-[protein] + ATP = 3-O-(5'-adenylyl)-L-seryl-[protein] + diphosphate. The enzyme catalyses L-threonyl-[protein] + ATP = 3-O-(5'-adenylyl)-L-threonyl-[protein] + diphosphate. The catalysed reaction is L-tyrosyl-[protein] + ATP = O-(5'-adenylyl)-L-tyrosyl-[protein] + diphosphate. It carries out the reaction L-histidyl-[protein] + UTP = N(tele)-(5'-uridylyl)-L-histidyl-[protein] + diphosphate. It catalyses the reaction L-seryl-[protein] + UTP = O-(5'-uridylyl)-L-seryl-[protein] + diphosphate. The enzyme catalyses L-tyrosyl-[protein] + UTP = O-(5'-uridylyl)-L-tyrosyl-[protein] + diphosphate. Its function is as follows. Nucleotidyltransferase involved in the post-translational modification of proteins. It can catalyze the addition of adenosine monophosphate (AMP) or uridine monophosphate (UMP) to a protein, resulting in modifications known as AMPylation and UMPylation. This Thioalkalivibrio sulfidiphilus (strain HL-EbGR7) protein is Protein nucleotidyltransferase YdiU.